The sequence spans 150 residues: UPF0756 membrane protein HI_1074 (150 aa).

4 helical membrane-spanning segments follow: residues 1–21 (MTLQ…LGVL), 52–72 (YGVK…LVSG), 81–101 (GFLS…AWLA), and 123–143 (IIGV…AGIL).

Belongs to the UPF0756 family.

The protein resides in the cell membrane. This chain is UPF0756 membrane protein HI_1074, found in Haemophilus influenzae (strain ATCC 51907 / DSM 11121 / KW20 / Rd).